Reading from the N-terminus, the 324-residue chain is Acetyl-coenzyme A carboxylase carboxyl transferase subunit alpha (324 aa).

Residues 44–298 enclose the CoA carboxyltransferase C-terminal domain; the sequence is QLEAKATQLR…KTAIVKSLDD (255 aa).

It belongs to the AccA family. Acetyl-CoA carboxylase is a heterohexamer composed of biotin carboxyl carrier protein (AccB), biotin carboxylase (AccC) and two subunits each of ACCase subunit alpha (AccA) and ACCase subunit beta (AccD).

The protein resides in the cytoplasm. The catalysed reaction is N(6)-carboxybiotinyl-L-lysyl-[protein] + acetyl-CoA = N(6)-biotinyl-L-lysyl-[protein] + malonyl-CoA. It participates in lipid metabolism; malonyl-CoA biosynthesis; malonyl-CoA from acetyl-CoA: step 1/1. Its function is as follows. Component of the acetyl coenzyme A carboxylase (ACC) complex. First, biotin carboxylase catalyzes the carboxylation of biotin on its carrier protein (BCCP) and then the CO(2) group is transferred by the carboxyltransferase to acetyl-CoA to form malonyl-CoA. The protein is Acetyl-coenzyme A carboxylase carboxyl transferase subunit alpha of Trichodesmium erythraeum (strain IMS101).